The sequence spans 504 residues: Maturase K (504 aa).

This sequence belongs to the intron maturase 2 family. MatK subfamily.

Its subcellular location is the plastid. The protein resides in the chloroplast. In terms of biological role, usually encoded in the trnK tRNA gene intron. Probably assists in splicing its own and other chloroplast group II introns. This is Maturase K from Barbarea vulgaris (Yellow rocket).